Here is a 143-residue protein sequence, read N- to C-terminus: Ribosome maturation factor RimP (143 aa).

This sequence belongs to the RimP family.

The protein localises to the cytoplasm. Functionally, required for maturation of 30S ribosomal subunits. The sequence is that of Ribosome maturation factor RimP from Borrelia recurrentis (strain A1).